The following is a 488-amino-acid chain: UDP-N-acetylmuramoyl-L-alanyl-D-glutamate--2,6-diaminopimelate ligase (488 aa).

Position 29 (serine 29) interacts with UDP-N-acetyl-alpha-D-muramoyl-L-alanyl-D-glutamate. Position 108–114 (108–114 (GTSGKTS)) interacts with ATP. UDP-N-acetyl-alpha-D-muramoyl-L-alanyl-D-glutamate contacts are provided by residues 150 to 151 (TT), serine 177, glutamine 183, and arginine 185. Position 217 is an N6-carboxylysine (lysine 217). Meso-2,6-diaminopimelate contacts are provided by residues arginine 381, 405-408 (DNPR), glycine 453, and glutamate 457. A Meso-diaminopimelate recognition motif motif is present at residues 405–408 (DNPR).

It belongs to the MurCDEF family. MurE subfamily. Requires Mg(2+) as cofactor. Carboxylation is probably crucial for Mg(2+) binding and, consequently, for the gamma-phosphate positioning of ATP.

Its subcellular location is the cytoplasm. It carries out the reaction UDP-N-acetyl-alpha-D-muramoyl-L-alanyl-D-glutamate + meso-2,6-diaminopimelate + ATP = UDP-N-acetyl-alpha-D-muramoyl-L-alanyl-gamma-D-glutamyl-meso-2,6-diaminopimelate + ADP + phosphate + H(+). It participates in cell wall biogenesis; peptidoglycan biosynthesis. Its function is as follows. Catalyzes the addition of meso-diaminopimelic acid to the nucleotide precursor UDP-N-acetylmuramoyl-L-alanyl-D-glutamate (UMAG) in the biosynthesis of bacterial cell-wall peptidoglycan. This is UDP-N-acetylmuramoyl-L-alanyl-D-glutamate--2,6-diaminopimelate ligase from Brucella melitensis biotype 1 (strain ATCC 23456 / CCUG 17765 / NCTC 10094 / 16M).